Here is a 276-residue protein sequence, read N- to C-terminus: NADPH-dependent 7-cyano-7-deazaguanine reductase (276 aa).

Position 80 to 82 (80 to 82 (VES)) interacts with substrate. 82–83 (SK) serves as a coordination point for NADPH. The Thioimide intermediate role is filled by Cys183. The active-site Proton donor is Asp190. Substrate is bound at residue 222–223 (HE). 251 to 252 (RG) contributes to the NADPH binding site.

The protein belongs to the GTP cyclohydrolase I family. QueF type 2 subfamily. In terms of assembly, homodimer.

It is found in the cytoplasm. It carries out the reaction 7-aminomethyl-7-carbaguanine + 2 NADP(+) = 7-cyano-7-deazaguanine + 2 NADPH + 3 H(+). The protein operates within tRNA modification; tRNA-queuosine biosynthesis. In terms of biological role, catalyzes the NADPH-dependent reduction of 7-cyano-7-deazaguanine (preQ0) to 7-aminomethyl-7-deazaguanine (preQ1). This is NADPH-dependent 7-cyano-7-deazaguanine reductase from Burkholderia cenocepacia (strain HI2424).